Here is a 158-residue protein sequence, read N- to C-terminus: Protein BTG2 (158 aa).

Ser-147 carries the post-translational modification Phosphoserine; by MAPK1 and MAPK3. Ser-149 is subject to Phosphoserine; by MAPK14.

It belongs to the BTG family. In terms of assembly, interacts with PRKCABP. Interacts with CNOT7 and CNOT8; indicative for an association with the CCR4-NOT complex. Interacts with PIN1, inducing mitochondrial depolarization. Phosphorylated at Ser-147 by MAPK1/ERK2 and MAPK3/ERK1, and at Ser-149 by MAPK14, leading to PIN1-binding and mitochondrial depolarization.

Functionally, anti-proliferative protein; the function is mediated by association with deadenylase subunits of the CCR4-NOT complex. Activates mRNA deadenylation in a CNOT6 and CNOT7-dependent manner. In vitro can inhibit deadenylase activity of CNOT7 and CNOT8. Involved in cell cycle regulation. Could be involved in the growth arrest and differentiation of the neuronal precursors. Modulates transcription regulation mediated by ESR1. Involved in mitochondrial depolarization and neurite outgrowth. The protein is Protein BTG2 (BTG2) of Homo sapiens (Human).